A 78-amino-acid polypeptide reads, in one-letter code: D-alanyl carrier protein (78 aa).

In terms of domain architecture, Carrier spans 1-78 (MEFRDQVLDL…KIVAVLEELR (78 aa)). Ser-36 is modified (O-(pantetheine 4'-phosphoryl)serine).

The protein belongs to the DltC family. In terms of processing, 4'-phosphopantetheine is transferred from CoA to a specific serine of apo-DCP.

The protein localises to the cytoplasm. The protein operates within cell wall biogenesis; lipoteichoic acid biosynthesis. In terms of biological role, carrier protein involved in the D-alanylation of lipoteichoic acid (LTA). The loading of thioester-linked D-alanine onto DltC is catalyzed by D-alanine--D-alanyl carrier protein ligase DltA. The DltC-carried D-alanyl group is further transferred to cell membrane phosphatidylglycerol (PG) by forming an ester bond, probably catalyzed by DltD. D-alanylation of LTA plays an important role in modulating the properties of the cell wall in Gram-positive bacteria, influencing the net charge of the cell wall. The sequence is that of D-alanyl carrier protein from Staphylococcus saprophyticus subsp. saprophyticus (strain ATCC 15305 / DSM 20229 / NCIMB 8711 / NCTC 7292 / S-41).